The chain runs to 491 residues: Cytosolic Fe-S cluster assembly factor NAR1 (491 aa).

8 residues coordinate [4Fe-4S] cluster: Cys20, Cys65, Cys68, Cys71, Cys177, Cys232, Cys414, and Cys418.

It belongs to the NARF family.

In terms of biological role, component of the cytosolic Fe/S protein assembly machinery. Required for maturation of extramitochondrial Fe/S proteins. May play a role in the transfer of pre-assembled Fe/S clusters to target apoproteins. The protein is Cytosolic Fe-S cluster assembly factor NAR1 (NAR1) of Yarrowia lipolytica (strain CLIB 122 / E 150) (Yeast).